Reading from the N-terminus, the 260-residue chain is Malonyl-[acyl-carrier protein] O-methyltransferase (260 aa).

The protein belongs to the methyltransferase superfamily.

The enzyme catalyses malonyl-[ACP] + S-adenosyl-L-methionine = malonyl-[ACP] methyl ester + S-adenosyl-L-homocysteine. The protein operates within cofactor biosynthesis; biotin biosynthesis. Converts the free carboxyl group of a malonyl-thioester to its methyl ester by transfer of a methyl group from S-adenosyl-L-methionine (SAM). It allows to synthesize pimeloyl-ACP via the fatty acid synthetic pathway. In Herminiimonas arsenicoxydans, this protein is Malonyl-[acyl-carrier protein] O-methyltransferase.